The sequence spans 241 residues: Terpene cyclase pyr4 (241 aa).

A run of 7 helical transmembrane segments spans residues 20–40, 49–69, 79–99, 113–133, 141–161, 168–188, and 206–226; these read IADW…LAMI, YGMA…YSVI, AVLT…IKFA, LPWI…ALAA, ANWG…CQLM, GASY…GIFL, and FVTW…TFLW.

The protein belongs to the paxB family.

The protein localises to the membrane. It catalyses the reaction 2-oxo-3-[(8S)-epoxy-(2E,6E)-farnesyl]-6-(pyridin-3-yl)-2H-pyran-4-olate + H(+) = deacetylpyripyropene E. It functions in the pathway secondary metabolite biosynthesis; terpenoid biosynthesis. Its function is as follows. Terpene cyclase; part of the gene cluster that mediates the biosynthesis of pyripyropene A, a specific human acyl-coenzyme A:cholesterol acyltransferase 2 inhibitor. The first step of the pathway is the synthesis of nicotinyl-CoA from nicotinic acid by the nicotinic acid-CoA ligase pyr1. Nicotinyl-CoA is then a substrate of polyketide synthase pyr2 to produce 4-hydroxy-6-(3-pyridinyl)-2H-pyran-2-one (HPPO) which is further prenylated by the polyprenyl transferase pyr6 to yield farnesyl-HPPO. The next steps consist of an epoxidation of farnesyl-HPPO to epoxyfarnesyl-HPPO by FAD-dependent monooxygenase pyr5 and a cyclization of the terpenoid portion by the terpene cyclase pyr4 to yield deacetyl-pyripyropene E. The 2 cytochrome P450 monooxygenases pyr3 and pyr9, and the 2 acetyltransferases pyr7 and pyr8 are involved in the conversion of deacetyl-pyripyropene E into pyripyropene A through several cycles of oxidation and acetylation steps. Pyr7 acetylates deacetyl-pyripyropene E to pyripyropene E which is oxidized to 11-deacetyl-pyripyropene O by pyr3, which is in turn acetylated into pyripyropene O by pyr8. Pyripyropene O is then oxidized to deacetyl-pyripyropene A by pyr9. Deacetyl-pyripyropene A is finally acetylated to pyripyropene A by pyr8. The protein is Terpene cyclase pyr4 of Aspergillus fumigatus (strain ATCC MYA-4609 / CBS 101355 / FGSC A1100 / Af293) (Neosartorya fumigata).